Reading from the N-terminus, the 328-residue chain is MSWLNTKKASCWRSSGRSATKSVTTNDAGTGNPAEQPARGAKQQPATETSRAGRDLRAAIVVGLSIGLVLIAVLVFVPRVWVAIVAVATLVATHEVVRRLREAGYLIPVIPLLIGGQAAVWLTWPFGAVGALAGFGGMVVVCMIWRLFMQDSVTRPTTGGAPSPGNYLSDVSATVFLAVWVPLFCSFGAMLVYPENGSGWVFCMMIAVIASDVGGYAVGVLFGKHPMVPTISPKKSWEGFAGSLVCGITATIITATFLVGKTPWIGALLGVLFVLTTALGDLVESQVKRDLGIKDMGRLLPGHGGLMDRLDGILPSAVAAWIVLTLLP.

Over residues 15 to 29 (SGRSATKSVTTNDAG) the composition is skewed to polar residues. Residues 15 to 50 (SGRSATKSVTTNDAGTGNPAEQPARGAKQQPATETS) form a disordered region. 7 helical membrane passes run 58–78 (AAIVVGLSIGLVLIAVLVFVP), 103–123 (AGYLIPVIPLLIGGQAAVWLT), 124–144 (WPFGAVGALAGFGGMVVVCMI), 173–193 (ATVFLAVWVPLFCSFGAMLVY), 202–222 (FCMMIAVIASDVGGYAVGVLF), 239–259 (GFAGSLVCGITATIITATFLV), and 263–283 (PWIGALLGVLFVLTTALGDLV).

It belongs to the CDS family.

The protein resides in the cell membrane. The catalysed reaction is a 1,2-diacyl-sn-glycero-3-phosphate + CTP + H(+) = a CDP-1,2-diacyl-sn-glycerol + diphosphate. The protein operates within phospholipid metabolism; CDP-diacylglycerol biosynthesis; CDP-diacylglycerol from sn-glycerol 3-phosphate: step 3/3. The polypeptide is Phosphatidate cytidylyltransferase (cdsA) (Mycobacterium tuberculosis (strain CDC 1551 / Oshkosh)).